The following is a 397-amino-acid chain: Elongation factor Tu (397 aa).

The tr-type G domain maps to 10–206 (KPHVNIGTIG…AVDESIPEPQ (197 aa)). The G1 stretch occupies residues 19 to 26 (GHIDHGKT). GTP is bound at residue 19–26 (GHIDHGKT). Thr-26 is a binding site for Mg(2+). The segment at 62 to 66 (GITIS) is G2. A G3 region spans residues 83–86 (DCPG). GTP-binding positions include 83–87 (DCPGH) and 138–141 (NKAD). The interval 138–141 (NKAD) is G4. A G5 region spans residues 176 to 178 (SAL).

It belongs to the TRAFAC class translation factor GTPase superfamily. Classic translation factor GTPase family. EF-Tu/EF-1A subfamily. As to quaternary structure, monomer.

It localises to the cytoplasm. It catalyses the reaction GTP + H2O = GDP + phosphate + H(+). Functionally, GTP hydrolase that promotes the GTP-dependent binding of aminoacyl-tRNA to the A-site of ribosomes during protein biosynthesis. In Frankia casuarinae (strain DSM 45818 / CECT 9043 / HFP020203 / CcI3), this protein is Elongation factor Tu.